The following is a 263-amino-acid chain: Endonuclease 8 (263 aa).

P2 serves as the catalytic Schiff-base intermediate with DNA. E3 functions as the Proton donor in the catalytic mechanism. Residue K53 is the Proton donor; for beta-elimination activity of the active site. DNA-binding residues include Q70, R125, and N169. An FPG-type zinc finger spans residues 229 to 263 (KVFHRDGEPCERCGSIIEKTTLSSRPFYWCPGCQH). R253 acts as the Proton donor; for delta-elimination activity in catalysis.

It belongs to the FPG family. The cofactor is Zn(2+).

It catalyses the reaction 2'-deoxyribonucleotide-(2'-deoxyribose 5'-phosphate)-2'-deoxyribonucleotide-DNA = a 3'-end 2'-deoxyribonucleotide-(2,3-dehydro-2,3-deoxyribose 5'-phosphate)-DNA + a 5'-end 5'-phospho-2'-deoxyribonucleoside-DNA + H(+). In terms of biological role, involved in base excision repair of DNA damaged by oxidation or by mutagenic agents. Acts as a DNA glycosylase that recognizes and removes damaged bases. Has a preference for oxidized pyrimidines, such as thymine glycol, 5,6-dihydrouracil and 5,6-dihydrothymine. Has AP (apurinic/apyrimidinic) lyase activity and introduces nicks in the DNA strand. Cleaves the DNA backbone by beta-delta elimination to generate a single-strand break at the site of the removed base with both 3'- and 5'-phosphates. In Escherichia coli (strain K12 / MC4100 / BW2952), this protein is Endonuclease 8.